The primary structure comprises 842 residues: Protein translocase subunit SecA (842 aa).

ATP is bound by residues Gln91, Gly109 to Thr113, and Asp498. Over residues Gln798 to Arg824 the composition is skewed to basic and acidic residues. Positions Gln798 to Pro827 are disordered. Zn(2+)-binding residues include Cys828, Cys830, Cys839, and Cys840.

Belongs to the SecA family. As to quaternary structure, monomer and homodimer. Part of the essential Sec protein translocation apparatus which comprises SecA, SecYEG and auxiliary proteins SecDF. Other proteins may also be involved. Zn(2+) serves as cofactor.

The protein resides in the cell membrane. The protein localises to the cytoplasm. The catalysed reaction is ATP + H2O + cellular proteinSide 1 = ADP + phosphate + cellular proteinSide 2.. In terms of biological role, part of the Sec protein translocase complex. Interacts with the SecYEG preprotein conducting channel. Has a central role in coupling the hydrolysis of ATP to the transfer of proteins into and across the cell membrane, serving as an ATP-driven molecular motor driving the stepwise translocation of polypeptide chains across the membrane. The sequence is that of Protein translocase subunit SecA from Staphylococcus carnosus (strain TM300).